A 655-amino-acid chain; its full sequence is Gastrulation defective protein 1 homolog (655 aa).

2 disordered regions span residues 1–54 (MQRG…EQMI) and 83–165 (AKVF…DEQS). Composition is skewed to basic and acidic residues over residues 23 to 36 (RSNE…KEST), 91 to 115 (QIEK…KEDD), and 134 to 146 (TDKE…SSKD). Positions 147 to 164 (EDSDDDDYSSDEDSDDEQ) are enriched in acidic residues. 7 WD repeats span residues 180–219 (HGSR…SSMR), 227–268 (CENH…ECCK), 281–321 (GHVA…EQLQ), 330–369 (GLRT…VNTT), 377–416 (QKGS…QPLH), 422–467 (FSRY…EVQR), and 470–510 (VSNA…RGAK). Disordered stretches follow at residues 544–580 (KSRT…VASS) and 633–655 (AIFS…EADK). Composition is skewed to basic and acidic residues over residues 554 to 564 (KARMDPVKSQR) and 639 to 655 (LPAD…EADK).

The protein belongs to the WD repeat GAD-1 family.

In Drosophila melanogaster (Fruit fly), this protein is Gastrulation defective protein 1 homolog.